Here is a 31-residue protein sequence, read N- to C-terminus: Cyclotide hyen-J (31 aa).

The cyclopeptide (Gly-Asp) cross-link spans 1 to 31; sequence GSVPCGESCVWIPCITSIAGCSCSNKVCYMD. Intrachain disulfides connect Cys5–Cys21, Cys9–Cys23, and Cys14–Cys28.

This is a cyclic peptide. Detected in seeds (at protein level).

Probably participates in a plant defense mechanism. This Pigea enneasperma (Spade flower) protein is Cyclotide hyen-J.